The chain runs to 690 residues: Beta-galactosidase (690 aa).

A substrate-binding site is contributed by Asn-173. Catalysis depends on Glu-174, which acts as the Proton donor. A substrate-binding site is contributed by Trp-345.

It belongs to the glycosyl hydrolase 42 family.

It carries out the reaction Hydrolysis of terminal non-reducing beta-D-galactose residues in beta-D-galactosides.. Activity stimulated by beta-mercaptoethanol. Highly specific towards beta-D-galactoside substrates. Hydrolyzes 5-bromo-4-chloro-3-indolyl-beta-D-galactopyranoside (X-Gal) and o-nitrophenyl-beta-D-galactopyranoside (ONPG). Has activity against p-nitrophenyl(pNP)-beta-D-galactoside, but not significantly at all towards pNP-alpha-D-galactoside, pNP-beta-D-glucoside, pNP-beta-D-mannoside, pNP-beta-L-fucoside, pNP-beta-D-xyloside, pNP-beta-L-arabinoside, pNP-beta-D-galuronide, pNP-beta-D-glucuronide, pNP-beta-D-lactoside or pNP-beta-D-cellobioside. This chain is Beta-galactosidase, found in Arthrobacter sp.